We begin with the raw amino-acid sequence, 354 residues long: Histidinol-phosphate aminotransferase (354 aa).

Basic and acidic residues predominate over residues 1–11 (MKSFLSDKAKS). A disordered region spans residues 1-33 (MKSFLSDKAKSIEPYTPGEQPKDKNYIKLNTNE). An N6-(pyridoxal phosphate)lysine modification is found at K211.

This sequence belongs to the class-II pyridoxal-phosphate-dependent aminotransferase family. Histidinol-phosphate aminotransferase subfamily. In terms of assembly, homodimer. It depends on pyridoxal 5'-phosphate as a cofactor.

It catalyses the reaction L-histidinol phosphate + 2-oxoglutarate = 3-(imidazol-4-yl)-2-oxopropyl phosphate + L-glutamate. It participates in amino-acid biosynthesis; L-histidine biosynthesis; L-histidine from 5-phospho-alpha-D-ribose 1-diphosphate: step 7/9. This chain is Histidinol-phosphate aminotransferase, found in Brachyspira hyodysenteriae (strain ATCC 49526 / WA1).